The primary structure comprises 96 residues: Large ribosomal subunit protein eL43 (96 aa).

The C4-type zinc finger occupies 41–62; that stretch reads CPVCGFMKLKRISTSIWECKKC.

The protein belongs to the eukaryotic ribosomal protein eL43 family. Zn(2+) is required as a cofactor.

This chain is Large ribosomal subunit protein eL43, found in Methanococcus aeolicus (strain ATCC BAA-1280 / DSM 17508 / OCM 812 / Nankai-3).